The chain runs to 686 residues: DNA ligase 2 (686 aa).

NAD(+) is bound by residues 37-41, 86-87, and Glu121; these read DDEYD and SL. The N6-AMP-lysine intermediate role is filled by Lys123. The NAD(+) site is built by Arg144, Glu179, Lys295, and Lys319. Positions 413, 416, 431, and 436 each coordinate Zn(2+). Residues 593–681 form the BRCT domain; the sequence is VRGEQLAGLN…GVQLPGVQAS (89 aa).

It belongs to the NAD-dependent DNA ligase family. LigA subfamily. Mg(2+) serves as cofactor. Mn(2+) is required as a cofactor.

The enzyme catalyses NAD(+) + (deoxyribonucleotide)n-3'-hydroxyl + 5'-phospho-(deoxyribonucleotide)m = (deoxyribonucleotide)n+m + AMP + beta-nicotinamide D-nucleotide.. Functionally, DNA ligase that catalyzes the formation of phosphodiester linkages between 5'-phosphoryl and 3'-hydroxyl groups in double-stranded DNA using NAD as a coenzyme and as the energy source for the reaction. It is essential for DNA replication and repair of damaged DNA. The polypeptide is DNA ligase 2 (Deinococcus deserti (strain DSM 17065 / CIP 109153 / LMG 22923 / VCD115)).